A 396-amino-acid chain; its full sequence is Acetate kinase (396 aa).

Asn7 contacts Mg(2+). Lys14 is an ATP binding site. Arg88 serves as a coordination point for substrate. The Proton donor/acceptor role is filled by Asp145. ATP-binding positions include His205 to Gly209, Asp279 to Arg281, and Gly327 to Asn331. Glu381 contributes to the Mg(2+) binding site.

It belongs to the acetokinase family. As to quaternary structure, homodimer. It depends on Mg(2+) as a cofactor. The cofactor is Mn(2+).

Its subcellular location is the cytoplasm. The catalysed reaction is acetate + ATP = acetyl phosphate + ADP. It participates in metabolic intermediate biosynthesis; acetyl-CoA biosynthesis; acetyl-CoA from acetate: step 1/2. Catalyzes the formation of acetyl phosphate from acetate and ATP. Can also catalyze the reverse reaction. The sequence is that of Acetate kinase from Campylobacter jejuni (strain RM1221).